Consider the following 148-residue polypeptide: Deoxyuridine 5'-triphosphate nucleotidohydrolase (148 aa).

Substrate is bound by residues 67-69 (RSG), Asn-80, 84-86 (LID), and Met-94.

The protein belongs to the dUTPase family. It depends on Mg(2+) as a cofactor.

It catalyses the reaction dUTP + H2O = dUMP + diphosphate + H(+). It participates in pyrimidine metabolism; dUMP biosynthesis; dUMP from dCTP (dUTP route): step 2/2. Its function is as follows. This enzyme is involved in nucleotide metabolism: it produces dUMP, the immediate precursor of thymidine nucleotides and it decreases the intracellular concentration of dUTP so that uracil cannot be incorporated into DNA. This chain is Deoxyuridine 5'-triphosphate nucleotidohydrolase, found in Burkholderia cenocepacia (strain HI2424).